A 482-amino-acid polypeptide reads, in one-letter code: tRNA sulfurtransferase (482 aa).

The THUMP domain occupies 61–165 (LAIRDALTRI…DDRLLLIKGR (105 aa)). Residues 183–184 (LI), Lys265, Gly287, and Gln296 contribute to the ATP site. Cysteines 344 and 456 form a disulfide. Positions 404-482 (FGPNDVILDI…GFNNVKVYRP (79 aa)) constitute a Rhodanese domain. The active-site Cysteine persulfide intermediate is the Cys456.

It belongs to the ThiI family.

The protein localises to the cytoplasm. It catalyses the reaction [ThiI sulfur-carrier protein]-S-sulfanyl-L-cysteine + a uridine in tRNA + 2 reduced [2Fe-2S]-[ferredoxin] + ATP + H(+) = [ThiI sulfur-carrier protein]-L-cysteine + a 4-thiouridine in tRNA + 2 oxidized [2Fe-2S]-[ferredoxin] + AMP + diphosphate. The catalysed reaction is [ThiS sulfur-carrier protein]-C-terminal Gly-Gly-AMP + S-sulfanyl-L-cysteinyl-[cysteine desulfurase] + AH2 = [ThiS sulfur-carrier protein]-C-terminal-Gly-aminoethanethioate + L-cysteinyl-[cysteine desulfurase] + A + AMP + 2 H(+). It participates in cofactor biosynthesis; thiamine diphosphate biosynthesis. Functionally, catalyzes the ATP-dependent transfer of a sulfur to tRNA to produce 4-thiouridine in position 8 of tRNAs, which functions as a near-UV photosensor. Also catalyzes the transfer of sulfur to the sulfur carrier protein ThiS, forming ThiS-thiocarboxylate. This is a step in the synthesis of thiazole, in the thiamine biosynthesis pathway. The sulfur is donated as persulfide by IscS. This chain is tRNA sulfurtransferase, found in Escherichia coli O139:H28 (strain E24377A / ETEC).